The chain runs to 737 residues: Translation initiation factor IF-2 (737 aa).

The disordered stretch occupies residues 55–152 (KKKEHIQHNK…PVPPRKNKPL (98 aa)). A compositionally biased stretch (basic and acidic residues) spans 60–70 (IQHNKNKDNFH). Residues 88-98 (KNVHKNNRKRS) show a composition bias toward basic residues. Low complexity predominate over residues 105–121 (NNNAKNGQRNNRNNRSN). The segment covering 122-131 (NKFKNKRNNN) has biased composition (basic residues). The segment covering 132–142 (NKRNNNFKKGN) has biased composition (low complexity). The 170-residue stretch at 238 to 407 (KRPPVVTIMG…LLEAEMLELH (170 aa)) folds into the tr-type G domain. The interval 247–254 (GHVDHGKT) is G1. Position 247 to 254 (247 to 254 (GHVDHGKT)) interacts with GTP. The tract at residues 272 to 276 (GITQH) is G2. The G3 stretch occupies residues 293-296 (DTPG). GTP is bound by residues 293 to 297 (DTPGH) and 347 to 350 (NKID). Residues 347–350 (NKID) are G4. Residues 383 to 385 (SAK) form a G5 region.

The protein belongs to the TRAFAC class translation factor GTPase superfamily. Classic translation factor GTPase family. IF-2 subfamily.

The protein localises to the cytoplasm. One of the essential components for the initiation of protein synthesis. Protects formylmethionyl-tRNA from spontaneous hydrolysis and promotes its binding to the 30S ribosomal subunits. Also involved in the hydrolysis of GTP during the formation of the 70S ribosomal complex. In Ligilactobacillus salivarius (strain UCC118) (Lactobacillus salivarius), this protein is Translation initiation factor IF-2.